Here is a 304-residue protein sequence, read N- to C-terminus: MITASPQEIAHKLGSGLLSFPVTHFTDDHSFDEAAYRENIGWLGQFDASGLFAAGGTGEFFSLTPPEVEQVVRAAVQEAPDGLPVIAPAGYGTATAVQMARSAESAGAHGILLLPPYLTEASQDGLVAHVKEVCAATTLGVTIYSRANAVYTEAAVAELADSCPNLVGFKDGVGNIEQMTRIYASLGDRLTYVGGLPTAEMFALPYLALGVTTYSSAIYNFVPQFALDFYNALRSGDNAFVVNALNDFVIPYCNLRNKKQGYAVSIIKAGMKVIDRPAGPVRPPLTDLDAVELAELADLIKKVS.

This sequence belongs to the DapA family.

It catalyses the reaction 5-dehydro-4-deoxy-D-glucarate + H(+) = 2,5-dioxopentanoate + CO2 + H2O. It functions in the pathway carbohydrate acid metabolism; D-glucarate degradation; 2,5-dioxopentanoate from D-glucarate: step 2/2. This is Probable 5-dehydro-4-deoxyglucarate dehydratase from Rhodococcus opacus (strain B4).